The chain runs to 108 residues: Somatoliberin (108 aa).

A signal peptide spans 1–20; that stretch reads MPLWVFFFVILTLSNSSHCS. Positions 21–31 are excised as a propeptide; sequence PPPPLTLRMRR. L75 carries the post-translational modification Leucine amide. A propeptide spanning residues 78–108 is cleaved from the precursor; it reads QVDSMWAEQKQMELESILVALLQKHSRNSQG.

Belongs to the glucagon family.

It localises to the secreted. Its function is as follows. GRF is released by the hypothalamus and acts on the adenohypophyse to stimulate the secretion of growth hormone. The protein is Somatoliberin (GHRH) of Homo sapiens (Human).